A 101-amino-acid chain; its full sequence is NAD(P)H-quinone oxidoreductase subunit 4L, chloroplastic (101 aa).

The next 3 membrane-spanning stretches (helical) occupy residues M2–I22, M32–F52, and I61–V81.

This sequence belongs to the complex I subunit 4L family. In terms of assembly, NDH is composed of at least 16 different subunits, 5 of which are encoded in the nucleus.

It localises to the plastid. It is found in the chloroplast thylakoid membrane. The enzyme catalyses a plastoquinone + NADH + (n+1) H(+)(in) = a plastoquinol + NAD(+) + n H(+)(out). The catalysed reaction is a plastoquinone + NADPH + (n+1) H(+)(in) = a plastoquinol + NADP(+) + n H(+)(out). In terms of biological role, NDH shuttles electrons from NAD(P)H:plastoquinone, via FMN and iron-sulfur (Fe-S) centers, to quinones in the photosynthetic chain and possibly in a chloroplast respiratory chain. The immediate electron acceptor for the enzyme in this species is believed to be plastoquinone. Couples the redox reaction to proton translocation, and thus conserves the redox energy in a proton gradient. The protein is NAD(P)H-quinone oxidoreductase subunit 4L, chloroplastic of Nymphaea alba (White water-lily).